The following is a 128-amino-acid chain: Glycoprotein hormone alpha-2 (128 aa).

The first 20 residues, 1 to 20 (MPMAPRVLLLCLLGLAVTEG), serve as a signal peptide directing secretion. 4 cysteine pairs are disulfide-bonded: Cys30/Cys88, Cys47/Cys102, Cys56/Cys118, and Cys60/Cys120. N-linked (GlcNAc...) asparagine glycans are attached at residues Asn36 and Asn80.

Belongs to the glycoprotein hormones subunit alpha family. As to quaternary structure, heterodimer with GPHB5; this heterodimer interacts with thyroid-stimulating hormone receptor (TSHR), and hence stimulates cAMP production.

The protein resides in the secreted. Its function is as follows. Functions as a heterodimeric glycoprotein hormone with GPHB5 able to bind and activate the thyroid-stimulating hormone receptor (TSHR), leading to increased cAMP production. Plays a central role in controlling thyroid cell metabolism. In Mus musculus (Mouse), this protein is Glycoprotein hormone alpha-2 (Gpha2).